A 90-amino-acid chain; its full sequence is U7-theraphotoxin-Hhn1h (90 aa).

Positions 1-19 (MKTAIFTVVLALAVFAVLS) are cleaved as a signal peptide. Residues 20–50 (FGWEANEKALSEEFTELIHEKEAASETEARE) constitute a propeptide that is removed on maturation. 3 disulfides stabilise this stretch: Cys51–Cys65, Cys58–Cys70, and Cys64–Cys81.

The protein belongs to the neurotoxin 10 (Hwtx-1) family. 13 (Hntx-13) subfamily. As to expression, expressed by the venom gland.

It localises to the secreted. In terms of biological role, ion channel inhibitor. The sequence is that of U7-theraphotoxin-Hhn1h from Cyriopagopus hainanus (Chinese bird spider).